The sequence spans 303 residues: Ribosomal protein L11 methyltransferase (303 aa).

S-adenosyl-L-methionine contacts are provided by T146, G167, D189, and N236.

It belongs to the methyltransferase superfamily. PrmA family.

The protein resides in the cytoplasm. It carries out the reaction L-lysyl-[protein] + 3 S-adenosyl-L-methionine = N(6),N(6),N(6)-trimethyl-L-lysyl-[protein] + 3 S-adenosyl-L-homocysteine + 3 H(+). Methylates ribosomal protein L11. The protein is Ribosomal protein L11 methyltransferase of Acinetobacter baylyi (strain ATCC 33305 / BD413 / ADP1).